Here is a 555-residue protein sequence, read N- to C-terminus: Urocanate hydratase (555 aa).

NAD(+) is bound by residues 52 to 53, Gln-130, 176 to 178, Glu-196, Arg-201, 242 to 243, 263 to 267, 273 to 274, and Tyr-322; these read GG, GMG, NA, QTSAH, and YL. Cys-410 is an active-site residue. An NAD(+)-binding site is contributed by Gly-492.

Belongs to the urocanase family. It depends on NAD(+) as a cofactor.

The protein resides in the cytoplasm. It catalyses the reaction 4-imidazolone-5-propanoate = trans-urocanate + H2O. Its pathway is amino-acid degradation; L-histidine degradation into L-glutamate; N-formimidoyl-L-glutamate from L-histidine: step 2/3. Functionally, catalyzes the conversion of urocanate to 4-imidazolone-5-propionate. The sequence is that of Urocanate hydratase from Shewanella baltica (strain OS155 / ATCC BAA-1091).